Consider the following 122-residue polypeptide: Large ribosomal subunit protein uL18 (122 aa).

Belongs to the universal ribosomal protein uL18 family. Part of the 50S ribosomal subunit; part of the 5S rRNA/L5/L18/L25 subcomplex. Contacts the 5S and 23S rRNAs.

Its function is as follows. This is one of the proteins that bind and probably mediate the attachment of the 5S RNA into the large ribosomal subunit, where it forms part of the central protuberance. The protein is Large ribosomal subunit protein uL18 of Desulforamulus reducens (strain ATCC BAA-1160 / DSM 100696 / MI-1) (Desulfotomaculum reducens).